The following is an 80-amino-acid chain: Toxin-like peptide AaF1CA1 (80 aa).

The signal sequence occupies residues methionine 1 to glycine 22. Positions valine 25–isoleucine 80 constitute an LCN-type CS-alpha/beta domain. Disulfide bonds link cysteine 40–cysteine 63, cysteine 49–cysteine 68, and cysteine 53–cysteine 70.

Belongs to the long (3 C-C) scorpion toxin superfamily. Expressed by the venom gland.

It localises to the secreted. Probable ion channel inhibitor. The sequence is that of Toxin-like peptide AaF1CA1 from Androctonus australis (Sahara scorpion).